Reading from the N-terminus, the 20-residue chain is Equinatoxin-1 (20 aa).

A plays an important role in the hemolytic activity region spans residues 3-12 (AVAGAVIEGA). An N-terminal region region spans residues 11–20 (GASLTFNVLQ).

The protein belongs to the actinoporin family. Sea anemone subfamily. As to quaternary structure, octamer or nonamer in membranes. Monomer in the soluble state.

It localises to the secreted. The protein localises to the nematocyst. It is found in the target cell membrane. Functionally, pore-forming protein that forms cations-selective hydrophilic pores of around 1 nm and causes cardiac stimulation and cytolysis. Pore formation is a multi-step process that involves specific recognition of membrane sphingomyelin (but neither cholesterol nor phosphatidylcholine) using aromatic rich region and adjacent phosphocholine (POC) binding site, firm binding to the membrane (mainly driven by hydrophobic interactions) accompanied by the transfer of the N-terminal region to the lipid-water interface and finally pore formation after oligomerization of monomers. Cytolytic effects include red blood cells hemolysis, platelet aggregation and lysis, cytotoxic and cytostatic effects on fibroblasts. Lethality in mammals has been ascribed to severe vasospasm of coronary vessels, cardiac arrhythmia, and inotropic effects. In Actinia equina (Beadlet anemone), this protein is Equinatoxin-1.